We begin with the raw amino-acid sequence, 171 residues long: 3-hydroxydecanoyl-[acyl-carrier-protein] dehydratase (171 aa).

His71 is a catalytic residue.

It belongs to the thioester dehydratase family. FabA subfamily. As to quaternary structure, homodimer.

Its subcellular location is the cytoplasm. The enzyme catalyses a (3R)-hydroxyacyl-[ACP] = a (2E)-enoyl-[ACP] + H2O. It catalyses the reaction (3R)-hydroxydecanoyl-[ACP] = (2E)-decenoyl-[ACP] + H2O. It carries out the reaction (2E)-decenoyl-[ACP] = (3Z)-decenoyl-[ACP]. It functions in the pathway lipid metabolism; fatty acid biosynthesis. Necessary for the introduction of cis unsaturation into fatty acids. Catalyzes the dehydration of (3R)-3-hydroxydecanoyl-ACP to E-(2)-decenoyl-ACP and then its isomerization to Z-(3)-decenoyl-ACP. Can catalyze the dehydratase reaction for beta-hydroxyacyl-ACPs with saturated chain lengths up to 16:0, being most active on intermediate chain length. This Rhizobium rhizogenes (strain K84 / ATCC BAA-868) (Agrobacterium radiobacter) protein is 3-hydroxydecanoyl-[acyl-carrier-protein] dehydratase.